We begin with the raw amino-acid sequence, 83 residues long: U25-theraphotoxin-Cg1a (83 aa).

Positions 1 to 23 (MRFHTLLFLSFLLLVSCALICTA) are cleaved as a signal peptide. A propeptide spanning residues 24–48 (QHPGLKKSGMFHENVGKGQHIEKKR) is cleaved from the precursor. Cystine bridges form between Cys-50-Cys-66, Cys-57-Cys-71, and Cys-65-Cys-81.

Belongs to the neurotoxin 07 (Beta/delta-agtx) family. 03 (aga-4) subfamily. JZTX sub-subfamily. As to expression, expressed by the venom gland.

The protein localises to the secreted. Its function is as follows. Inhibits TTX-sensitive sodium currents in rat dorsal root ganglion (DRG) neurons. This chain is U25-theraphotoxin-Cg1a, found in Chilobrachys guangxiensis (Chinese earth tiger tarantula).